A 390-amino-acid chain; its full sequence is 1-deoxy-D-xylulose 5-phosphate reductoisomerase (390 aa).

NADPH contacts are provided by threonine 10, glycine 11, serine 12, valine 13, glycine 38, asparagine 40, and asparagine 123. A 1-deoxy-D-xylulose 5-phosphate-binding site is contributed by lysine 124. Glutamate 125 lines the NADPH pocket. Aspartate 149 provides a ligand contact to Mn(2+). 1-deoxy-D-xylulose 5-phosphate contacts are provided by serine 150, glutamate 151, serine 175, and histidine 198. Glutamate 151 lines the Mn(2+) pocket. Glycine 204 is an NADPH binding site. Positions 211, 216, 217, and 220 each coordinate 1-deoxy-D-xylulose 5-phosphate. Glutamate 220 contributes to the Mn(2+) binding site.

This sequence belongs to the DXR family. It depends on Mg(2+) as a cofactor. Mn(2+) serves as cofactor.

The enzyme catalyses 2-C-methyl-D-erythritol 4-phosphate + NADP(+) = 1-deoxy-D-xylulose 5-phosphate + NADPH + H(+). The protein operates within isoprenoid biosynthesis; isopentenyl diphosphate biosynthesis via DXP pathway; isopentenyl diphosphate from 1-deoxy-D-xylulose 5-phosphate: step 1/6. Its function is as follows. Catalyzes the NADPH-dependent rearrangement and reduction of 1-deoxy-D-xylulose-5-phosphate (DXP) to 2-C-methyl-D-erythritol 4-phosphate (MEP). This is 1-deoxy-D-xylulose 5-phosphate reductoisomerase from Paracoccus denitrificans (strain Pd 1222).